The following is a 155-amino-acid chain: 3-dehydroquinate dehydratase 1 (155 aa).

The active-site Proton acceptor is the Tyr28. Substrate is bound by residues Asn80, His86, and Asp93. His106 acts as the Proton donor in catalysis. Substrate is bound by residues Val107–Thr108 and Arg117.

It belongs to the type-II 3-dehydroquinase family. As to quaternary structure, homododecamer.

The enzyme catalyses 3-dehydroquinate = 3-dehydroshikimate + H2O. It participates in metabolic intermediate biosynthesis; chorismate biosynthesis; chorismate from D-erythrose 4-phosphate and phosphoenolpyruvate: step 3/7. In terms of biological role, catalyzes a trans-dehydration via an enolate intermediate. The chain is 3-dehydroquinate dehydratase 1 (aroQ1) from Bradyrhizobium diazoefficiens (strain JCM 10833 / BCRC 13528 / IAM 13628 / NBRC 14792 / USDA 110).